The following is a 420-amino-acid chain: UDP-N-acetylglucosamine 1-carboxyvinyltransferase (420 aa).

Residue 22 to 23 (KN) participates in phosphoenolpyruvate binding. Arg92 lines the UDP-N-acetyl-alpha-D-glucosamine pocket. Residue Cys116 is the Proton donor of the active site. A 2-(S-cysteinyl)pyruvic acid O-phosphothioketal modification is found at Cys116. Residues 121–125 (RPVDQ), Asp304, and Ile326 contribute to the UDP-N-acetyl-alpha-D-glucosamine site.

This sequence belongs to the EPSP synthase family. MurA subfamily.

It localises to the cytoplasm. It carries out the reaction phosphoenolpyruvate + UDP-N-acetyl-alpha-D-glucosamine = UDP-N-acetyl-3-O-(1-carboxyvinyl)-alpha-D-glucosamine + phosphate. It participates in cell wall biogenesis; peptidoglycan biosynthesis. Functionally, cell wall formation. Adds enolpyruvyl to UDP-N-acetylglucosamine. This is UDP-N-acetylglucosamine 1-carboxyvinyltransferase from Paraburkholderia xenovorans (strain LB400).